The chain runs to 300 residues: Geranylgeranyl diphosphate synthase (300 aa).

Isopentenyl diphosphate is bound by residues Lys-50, Arg-53, and His-82. Mg(2+) contacts are provided by Asp-89 and Asp-95. Residue Arg-100 coordinates (2E,6E)-farnesyl diphosphate. Arg-101 serves as a coordination point for isopentenyl diphosphate. Lys-186, Thr-187, and Gln-224 together coordinate (2E,6E)-farnesyl diphosphate.

Belongs to the FPP/GGPP synthase family. Requires Mg(2+) as cofactor.

The protein localises to the plastid. The protein resides in the cyanelle. It catalyses the reaction isopentenyl diphosphate + (2E,6E)-farnesyl diphosphate = (2E,6E,10E)-geranylgeranyl diphosphate + diphosphate. The protein operates within isoprenoid biosynthesis; geranylgeranyl diphosphate biosynthesis; geranylgeranyl diphosphate from farnesyl diphosphate and isopentenyl diphosphate: step 1/1. Its function is as follows. Catalyzes the condensation of farnesyl diphosphate (FPP) and isopentenyl diphosphate (IPP) to yield geranylgeranyl diphosphate (GGPP) needed for biosynthesis of carotenoids and diterpenes. This Cyanophora paradoxa protein is Geranylgeranyl diphosphate synthase (crtE).